The chain runs to 58 residues: Potassium channel toxin alpha-KTx 9.9 (58 aa).

An N-terminal signal peptide occupies residues 1–21 (KKTSRLFTLVLIVLAMNVMMA). Positions 22–30 (IISDPVVEA) are excised as a propeptide. Disulfide bonds link Cys-33-Cys-49, Cys-36-Cys-54, and Cys-40-Cys-56.

This sequence belongs to the short scorpion toxin superfamily. Potassium channel inhibitor family. Alpha-KTx 09 subfamily. Expressed by the venom gland.

It localises to the secreted. Its function is as follows. Potassium channel inhibitor. In Buthus israelis (Israeli scorpion), this protein is Potassium channel toxin alpha-KTx 9.9.